Reading from the N-terminus, the 171-residue chain is Adenine phosphoribosyltransferase (171 aa).

The protein belongs to the purine/pyrimidine phosphoribosyltransferase family. In terms of assembly, homodimer.

Its subcellular location is the cytoplasm. The catalysed reaction is AMP + diphosphate = 5-phospho-alpha-D-ribose 1-diphosphate + adenine. It participates in purine metabolism; AMP biosynthesis via salvage pathway; AMP from adenine: step 1/1. In terms of biological role, catalyzes a salvage reaction resulting in the formation of AMP, that is energically less costly than de novo synthesis. This is Adenine phosphoribosyltransferase from Acetivibrio thermocellus (strain ATCC 27405 / DSM 1237 / JCM 9322 / NBRC 103400 / NCIMB 10682 / NRRL B-4536 / VPI 7372) (Clostridium thermocellum).